A 196-amino-acid polypeptide reads, in one-letter code: DnaA initiator-associating protein DiaA (196 aa).

The SIS domain occupies 34–196 (LVQSLLNGNK…DNTLFPHQDD (163 aa)).

Belongs to the SIS family. DiaA subfamily. Homotetramer; dimer of dimers.

Its function is as follows. Required for the timely initiation of chromosomal replication via direct interactions with the DnaA initiator protein. In Shigella boydii serotype 18 (strain CDC 3083-94 / BS512), this protein is DnaA initiator-associating protein DiaA.